The sequence spans 471 residues: Intraflagellar transport protein 46 homolog (471 aa).

2 disordered regions span residues methionine 1–arginine 202 and serine 226–aspartate 246. 2 stretches are compositionally biased toward acidic residues: residues serine 89–aspartate 99 and aspartate 231–aspartate 246.

It belongs to the IFT46 family. In terms of assembly, component of the IFT complex B composed of at least che-2, che-13, dyf-1, dyf-3, dyf-6, dyf-11, dyf-13, ift-20, ift-74, ift-81, ifta-2, osm-1, osm-5 and osm-6. As to expression, expressed in the hypodermis and sensory neurons including inner labial, PDE, amphid and phasmid neurons.

It is found in the cell projection. The protein localises to the cilium. The protein resides in the cytoplasm. It localises to the cytoskeleton. Its subcellular location is the cilium basal body. It is found in the dendrite. The protein localises to the perikaryon. Its function is as follows. Component of the intraflagellar transport (IFT) complex B required for transport of proteins in the motile cilium. May be required for ciliary entrance and transport of specific ciliary cargo proteins such as che-3 which are related to motility. Required for normal morphology and function of ciliated amphid sensory neurons. This chain is Intraflagellar transport protein 46 homolog, found in Caenorhabditis elegans.